Consider the following 321-residue polypeptide: Probable pectate lyase A (321 aa).

The signal sequence occupies residues methionine 1 to alanine 20. Asparagine 93 carries N-linked (GlcNAc...) asparagine glycosylation. 3 residues coordinate Ca(2+): aspartate 134, aspartate 163, and aspartate 167. Arginine 220 is a catalytic residue.

This sequence belongs to the polysaccharide lyase 1 family. Requires Ca(2+) as cofactor.

It localises to the secreted. The enzyme catalyses Eliminative cleavage of (1-&gt;4)-alpha-D-galacturonan to give oligosaccharides with 4-deoxy-alpha-D-galact-4-enuronosyl groups at their non-reducing ends.. Functionally, pectinolytic enzyme consist of four classes of enzymes: pectin lyase, polygalacturonase, pectin methylesterase and rhamnogalacturonase. Among pectinolytic enzymes, pectin lyase is the most important in depolymerization of pectin, since it cleaves internal glycosidic bonds of highly methylated pectins. Favors pectate, the anion, over pectin, the methyl ester. This chain is Probable pectate lyase A (plyA), found in Aspergillus flavus (strain ATCC 200026 / FGSC A1120 / IAM 13836 / NRRL 3357 / JCM 12722 / SRRC 167).